The sequence spans 283 residues: Nucleotide-binding protein DR_1434 (283 aa).

8-15 serves as a coordination point for ATP; the sequence is GLSGSGKS. 57 to 60 contributes to the GTP binding site; sequence DTRT.

This sequence belongs to the RapZ-like family.

In terms of biological role, displays ATPase and GTPase activities. The polypeptide is Nucleotide-binding protein DR_1434 (Deinococcus radiodurans (strain ATCC 13939 / DSM 20539 / JCM 16871 / CCUG 27074 / LMG 4051 / NBRC 15346 / NCIMB 9279 / VKM B-1422 / R1)).